The primary structure comprises 629 residues: tRNA uridine 5-carboxymethylaminomethyl modification enzyme MnmG (629 aa).

FAD is bound by residues glycine 13–glycine 18, valine 125, and serine 180. Glycine 273 to phenylalanine 287 contacts NAD(+). Glutamine 370 contributes to the FAD binding site.

It belongs to the MnmG family. As to quaternary structure, homodimer. Heterotetramer of two MnmE and two MnmG subunits. It depends on FAD as a cofactor.

It localises to the cytoplasm. NAD-binding protein involved in the addition of a carboxymethylaminomethyl (cmnm) group at the wobble position (U34) of certain tRNAs, forming tRNA-cmnm(5)s(2)U34. This is tRNA uridine 5-carboxymethylaminomethyl modification enzyme MnmG from Shewanella oneidensis (strain ATCC 700550 / JCM 31522 / CIP 106686 / LMG 19005 / NCIMB 14063 / MR-1).